The primary structure comprises 210 residues: Ribosomal RNA small subunit methyltransferase G (210 aa).

S-adenosyl-L-methionine contacts are provided by residues Gly77, Phe82, 100–102, 128–129, and Arg141; these read ERS and VE.

The protein belongs to the methyltransferase superfamily. RNA methyltransferase RsmG family.

The protein resides in the cytoplasm. Functionally, specifically methylates the N7 position of a guanine in 16S rRNA. This Borrelia recurrentis (strain A1) protein is Ribosomal RNA small subunit methyltransferase G.